Consider the following 321-residue polypeptide: Phosphatidylglycerol phospholipase C (321 aa).

In terms of domain architecture, GP-PDE spans 2–251; that stretch reads VEIVGHRAFK…DDPIKARKLC (250 aa). The chain crosses the membrane as a helical; Anchor for type IV membrane protein span at residues 297-315; it reads WVHIKLCGWSIAYVIFLFL.

This sequence belongs to the glycerophosphoryl diester phosphodiesterase family.

The protein resides in the mitochondrion membrane. It localises to the lipid droplet. It catalyses the reaction a 1,2-diacyl-sn-glycero-3-phospho-(1'-sn-glycerol) + H2O = sn-glycerol 3-phosphate + a 1,2-diacyl-sn-glycerol + H(+). Functionally, phosphatidylglycerol phospholipase required for the removal of excess phosphatidylglycerol (PG) via a phospholipase C-type degradation mechanism. This is Phosphatidylglycerol phospholipase C (PGC1) from Saccharomyces cerevisiae (strain ATCC 204508 / S288c) (Baker's yeast).